The chain runs to 210 residues: Probable GTP-binding protein EngB (210 aa).

One can recognise an EngB-type G domain in the interval threonine 25–glutamate 199. GTP-binding positions include glycine 33 to serine 40, glycine 60 to leucine 64, aspartate 78 to glycine 81, threonine 145 to aspartate 148, and phenylalanine 178 to serine 180. Residues serine 40 and threonine 62 each coordinate Mg(2+).

The protein belongs to the TRAFAC class TrmE-Era-EngA-EngB-Septin-like GTPase superfamily. EngB GTPase family. The cofactor is Mg(2+).

In terms of biological role, necessary for normal cell division and for the maintenance of normal septation. The protein is Probable GTP-binding protein EngB of Klebsiella pneumoniae (strain 342).